Consider the following 213-residue polypeptide: Gas vesicle protein F (213 aa).

Belongs to the gas vesicle GvpF/GvpL family. In terms of assembly, binds GvpA.

Its subcellular location is the gas vesicle. Functionally, a minor component of the gas vesicle, may be involved in preventing GvpA aggregation during gas vesicle nucleation. Gas vesicles are hollow, gas filled proteinaceous nanostructures found in some microorganisms. They allow positioning of halobacteria at the optimal depth for growth in the poorly aerated, shallow brine pools of their habitat. Expression of a 9.5 kb mc-vac DNA fragment containing 2 divergently transcribed regions (gvpD-gvpE-gvpF-gvpG-gvpH-gvpI-gvpJ-gvpK-gvpL-gvpM and gvpA-gvpC-gvpN-gvpO) allows H.volcanii to produce gas vesicles. The polypeptide is Gas vesicle protein F (Haloferax mediterranei (strain ATCC 33500 / DSM 1411 / JCM 8866 / NBRC 14739 / NCIMB 2177 / R-4) (Halobacterium mediterranei)).